The primary structure comprises 157 residues: Putative gamma-glutamylcyclotransferase CG2811 (157 aa).

Residue 14 to 17 (YGTL) coordinates substrate. The active-site Proton acceptor is the glutamate 89.

Belongs to the gamma-glutamylcyclotransferase family.

Putative gamma-glutamylcyclotransferase. This Drosophila melanogaster (Fruit fly) protein is Putative gamma-glutamylcyclotransferase CG2811.